Here is a 3092-residue protein sequence, read N- to C-terminus: Probable polyketide synthase 45 (3092 aa).

The Ketosynthase family 3 (KS3) domain occupies 10-430; it reads DNDVAIIGIG…GSNVCLILTE (421 aa). Active-site for beta-ketoacyl synthase activity residues include C170, H315, and H353. The segment at 640-673 is acyl/malonyl transferase; the sequence is GILASISIGHSLGEVSSAVCSGMIDLETGCFIIY. Catalysis depends on S650, which acts as the For acyl/malonyl transferase activity. The segment at 967–1087 is N-terminal hotdog fold; it reads INQLGNRNER…GKFSITKHND (121 aa). One can recognise a PKS/mFAS DH domain in the interval 967–1254; sequence INQLGNRNER…YTQLTPYKNQ (288 aa). H999 functions as the Proton acceptor; for dehydratase activity in the catalytic mechanism. Residues 1103 to 1254 are C-terminal hotdog fold; it reads NFVTIQKKEL…YTQLTPYKNQ (152 aa). D1165 (proton donor; for dehydratase activity) is an active-site residue. The region spanning 2566–2644 is the Carrier domain; sequence SDDLSIREEI…QLIQSVTDAM (79 aa). Position 2604 is an O-(pantetheine 4'-phosphoryl)serine (S2604). Residues 2705–2725 form a helical membrane-spanning segment; the sequence is NTVFLTGSSGFIGIYILFYLI.

Pantetheine 4'-phosphate serves as cofactor.

It localises to the membrane. Its function is as follows. Probable polyketide synthase. The sequence is that of Probable polyketide synthase 45 (pks45) from Dictyostelium discoideum (Social amoeba).